Reading from the N-terminus, the 263-residue chain is Ribosomal RNA small subunit methyltransferase J (263 aa).

Residues 108-109, 124-125, and Asp-178 each bind S-adenosyl-L-methionine; these read RD and ER.

It belongs to the methyltransferase superfamily. RsmJ family.

Its subcellular location is the cytoplasm. It catalyses the reaction guanosine(1516) in 16S rRNA + S-adenosyl-L-methionine = N(2)-methylguanosine(1516) in 16S rRNA + S-adenosyl-L-homocysteine + H(+). Specifically methylates the guanosine in position 1516 of 16S rRNA. The polypeptide is Ribosomal RNA small subunit methyltransferase J (Idiomarina loihiensis (strain ATCC BAA-735 / DSM 15497 / L2-TR)).